Consider the following 294-residue polypeptide: Phosphatidylserine decarboxylase proenzyme (294 aa).

Active-site charge relay system; for autoendoproteolytic cleavage activity residues include D113, H169, and S256. Catalysis depends on S256, which acts as the Schiff-base intermediate with substrate; via pyruvic acid; for decarboxylase activity. At S256 the chain carries Pyruvic acid (Ser); by autocatalysis.

Belongs to the phosphatidylserine decarboxylase family. PSD-B subfamily. Prokaryotic type II sub-subfamily. As to quaternary structure, heterodimer of a large membrane-associated beta subunit and a small pyruvoyl-containing alpha subunit. Pyruvate is required as a cofactor. In terms of processing, is synthesized initially as an inactive proenzyme. Formation of the active enzyme involves a self-maturation process in which the active site pyruvoyl group is generated from an internal serine residue via an autocatalytic post-translational modification. Two non-identical subunits are generated from the proenzyme in this reaction, and the pyruvate is formed at the N-terminus of the alpha chain, which is derived from the carboxyl end of the proenzyme. The autoendoproteolytic cleavage occurs by a canonical serine protease mechanism, in which the side chain hydroxyl group of the serine supplies its oxygen atom to form the C-terminus of the beta chain, while the remainder of the serine residue undergoes an oxidative deamination to produce ammonia and the pyruvoyl prosthetic group on the alpha chain. During this reaction, the Ser that is part of the protease active site of the proenzyme becomes the pyruvoyl prosthetic group, which constitutes an essential element of the active site of the mature decarboxylase.

It is found in the cell membrane. It catalyses the reaction a 1,2-diacyl-sn-glycero-3-phospho-L-serine + H(+) = a 1,2-diacyl-sn-glycero-3-phosphoethanolamine + CO2. It functions in the pathway phospholipid metabolism; phosphatidylethanolamine biosynthesis; phosphatidylethanolamine from CDP-diacylglycerol: step 2/2. Its function is as follows. Catalyzes the formation of phosphatidylethanolamine (PtdEtn) from phosphatidylserine (PtdSer). This chain is Phosphatidylserine decarboxylase proenzyme, found in Clostridium perfringens (strain ATCC 13124 / DSM 756 / JCM 1290 / NCIMB 6125 / NCTC 8237 / Type A).